Here is a 240-residue protein sequence, read N- to C-terminus: UDP-2,3-diacylglucosamine hydrolase (240 aa).

5 residues coordinate Mn(2+): aspartate 8, histidine 10, aspartate 41, asparagine 79, and histidine 114. 79–80 provides a ligand contact to substrate; sequence NR. Residues aspartate 122, serine 160, threonine 164, lysine 167, and histidine 195 each coordinate substrate. Histidine 195 and histidine 197 together coordinate Mn(2+).

Belongs to the LpxH family. It depends on Mn(2+) as a cofactor.

It localises to the cell inner membrane. The enzyme catalyses UDP-2-N,3-O-bis[(3R)-3-hydroxytetradecanoyl]-alpha-D-glucosamine + H2O = 2-N,3-O-bis[(3R)-3-hydroxytetradecanoyl]-alpha-D-glucosaminyl 1-phosphate + UMP + 2 H(+). It functions in the pathway glycolipid biosynthesis; lipid IV(A) biosynthesis; lipid IV(A) from (3R)-3-hydroxytetradecanoyl-[acyl-carrier-protein] and UDP-N-acetyl-alpha-D-glucosamine: step 4/6. Hydrolyzes the pyrophosphate bond of UDP-2,3-diacylglucosamine to yield 2,3-diacylglucosamine 1-phosphate (lipid X) and UMP by catalyzing the attack of water at the alpha-P atom. Involved in the biosynthesis of lipid A, a phosphorylated glycolipid that anchors the lipopolysaccharide to the outer membrane of the cell. The sequence is that of UDP-2,3-diacylglucosamine hydrolase from Pseudomonas paraeruginosa (strain DSM 24068 / PA7) (Pseudomonas aeruginosa (strain PA7)).